Reading from the N-terminus, the 599-residue chain is Glycerophosphodiester phosphodiesterase domain-containing protein 5 (599 aa).

At 1–42 (MVKHQPLQYYEPQLCLSCLTGIYGCRWKRYQRSHDDTTKWER) the chain is on the cytoplasmic side. Disulfide bonds link C15-C18 and C25-C576. The chain crosses the membrane as a helical span at residues 43-63 (LWFLILTSSFFLTLVWFYFWW). The Extracellular portion of the chain corresponds to 64-87 (EVHNDYNEINWFLYNRMGYWSDWS). A helical transmembrane segment spans residues 88-108 (IPILVTTAAGFTYITVLLILA). Topologically, residues 109-125 (LCHIAVGQQMNLHWLHK) are cytoplasmic. Residues 126–146 (IGLMTTLITTVVTMSSIAQLW) traverse the membrane as a helical segment. Topologically, residues 147–160 (DDEWEMVFISLQAT) are extracellular. A helical membrane pass occupies residues 161-181 (APFLHIGALAAVTALSWLIAG). Topologically, residues 182 to 192 (QFARMEKATSQ) are cytoplasmic. The chain crosses the membrane as a helical span at residues 193–213 (MLMVTAYLAVVVALYLVPLTI). Residues 214–497 (SSPCIMEKKA…IWLMPPDEYR (284 aa)) lie on the Extracellular side of the membrane. Residues 228 to 485 (PAIIGHRGAP…DSSHVLRKVP (258 aa)) form the GP-PDE domain. 5 N-linked (GlcNAc...) asparagine glycosylation sites follow: N301, N336, N352, N374, and N448. Residues 498–518 (LIWITSDLISFIIIVGVFIFQ) form a helical membrane-spanning segment. Residues 519–599 (NYHNDQWRLG…DHRDTRLRMN (81 aa)) lie on the Cytoplasmic side of the membrane.

This sequence belongs to the glycerophosphoryl diester phosphodiesterase family. As to quaternary structure, interacts with PRDX1; forms a mixed-disulfide with PRDX1, leading to disrupt intramolecular disulfide bond between Cys-25 and Cys-576. Post-translationally, intramolecular disulfide bond between Cys-25 and Cys-576 is reduced by PRDX1. In terms of tissue distribution, detected in mature motor neurons.

Its subcellular location is the endomembrane system. The protein resides in the cytoplasm. It localises to the perinuclear region. It is found in the cell projection. The protein localises to the growth cone. It catalyses the reaction a 1,2-diacyl-sn-glycero-3-phospho-(1D-myo-inositol-4,5-bisphosphate) + H2O = 1D-myo-inositol 1,4,5-trisphosphate + a 1,2-diacyl-sn-glycerol + H(+). The enzyme catalyses sn-glycerol 3-phosphocholine + H2O = sn-glycerol 3-phosphate + choline + H(+). Its activity is regulated as follows. Activated by PRDX1 by reduction of an intramolecular disulfide bond. Functionally, glycerophosphodiester phosphodiesterase that promotes cell cycle exit and drives spinal motor neuron differentiation. Mediates the cleavage of glycosylphosphatidylinositol (GPI) anchor of target proteins: removes the GPI-anchor of RECK, leading to release RECK from the plasma membrane. May contribute to the osmotic regulation of cellular glycerophosphocholine. In Gallus gallus (Chicken), this protein is Glycerophosphodiester phosphodiesterase domain-containing protein 5 (GDPD5).